The following is a 345-amino-acid chain: Inositol 2-dehydrogenase (345 aa).

The protein belongs to the Gfo/Idh/MocA family. In terms of assembly, homotetramer.

The catalysed reaction is myo-inositol + NAD(+) = scyllo-inosose + NADH + H(+). Functionally, involved in the oxidation of myo-inositol (MI) to 2-keto-myo-inositol (2KMI or 2-inosose). The chain is Inositol 2-dehydrogenase from Mycolicibacterium smegmatis (strain ATCC 700084 / mc(2)155) (Mycobacterium smegmatis).